Here is a 174-residue protein sequence, read N- to C-terminus: Large ribosomal subunit protein uL15 (174 aa).

Disordered stretches follow at residues 1–56 and 150–174; these read MKLH…GQMR and VERR…TPGA. Residues 21 to 35 are compositionally biased toward gly residues; it reads RGIGSGKGKTGGKGM.

It belongs to the universal ribosomal protein uL15 family. Part of the 50S ribosomal subunit.

Its function is as follows. Binds to the 23S rRNA. The protein is Large ribosomal subunit protein uL15 of Roseiflexus castenholzii (strain DSM 13941 / HLO8).